The primary structure comprises 281 residues: Beta-lactamase (281 aa).

The first 24 residues, 1–24 (MKKLIFLIVIALVLSACNSNSSHA), serve as a signal peptide directing secretion. Serine 63 acts as the Acyl-ester intermediate in catalysis. 225 to 227 (KSG) serves as a coordination point for substrate.

Belongs to the class-A beta-lactamase family.

The catalysed reaction is a beta-lactam + H2O = a substituted beta-amino acid. The polypeptide is Beta-lactamase (blaZ) (Staphylococcus aureus).